A 256-amino-acid chain; its full sequence is 1-(5-phosphoribosyl)-5-[(5-phosphoribosylamino)methylideneamino] imidazole-4-carboxamide isomerase (256 aa).

Residue Asp-8 is the Proton acceptor of the active site. Asp-129 (proton donor) is an active-site residue.

It belongs to the HisA/HisF family.

It is found in the cytoplasm. The enzyme catalyses 1-(5-phospho-beta-D-ribosyl)-5-[(5-phospho-beta-D-ribosylamino)methylideneamino]imidazole-4-carboxamide = 5-[(5-phospho-1-deoxy-D-ribulos-1-ylimino)methylamino]-1-(5-phospho-beta-D-ribosyl)imidazole-4-carboxamide. The protein operates within amino-acid biosynthesis; L-histidine biosynthesis; L-histidine from 5-phospho-alpha-D-ribose 1-diphosphate: step 4/9. In Syntrophobacter fumaroxidans (strain DSM 10017 / MPOB), this protein is 1-(5-phosphoribosyl)-5-[(5-phosphoribosylamino)methylideneamino] imidazole-4-carboxamide isomerase.